A 287-amino-acid chain; its full sequence is Phosphatidylserine decarboxylase proenzyme (287 aa).

Active-site charge relay system; for autoendoproteolytic cleavage activity residues include Asp-89, His-146, and Ser-252. Ser-252 serves as the catalytic Schiff-base intermediate with substrate; via pyruvic acid; for decarboxylase activity. Ser-252 is subject to Pyruvic acid (Ser); by autocatalysis.

This sequence belongs to the phosphatidylserine decarboxylase family. PSD-B subfamily. Prokaryotic type I sub-subfamily. As to quaternary structure, heterodimer of a large membrane-associated beta subunit and a small pyruvoyl-containing alpha subunit. The cofactor is pyruvate. In terms of processing, is synthesized initially as an inactive proenzyme. Formation of the active enzyme involves a self-maturation process in which the active site pyruvoyl group is generated from an internal serine residue via an autocatalytic post-translational modification. Two non-identical subunits are generated from the proenzyme in this reaction, and the pyruvate is formed at the N-terminus of the alpha chain, which is derived from the carboxyl end of the proenzyme. The autoendoproteolytic cleavage occurs by a canonical serine protease mechanism, in which the side chain hydroxyl group of the serine supplies its oxygen atom to form the C-terminus of the beta chain, while the remainder of the serine residue undergoes an oxidative deamination to produce ammonia and the pyruvoyl prosthetic group on the alpha chain. During this reaction, the Ser that is part of the protease active site of the proenzyme becomes the pyruvoyl prosthetic group, which constitutes an essential element of the active site of the mature decarboxylase.

Its subcellular location is the cell membrane. The enzyme catalyses a 1,2-diacyl-sn-glycero-3-phospho-L-serine + H(+) = a 1,2-diacyl-sn-glycero-3-phosphoethanolamine + CO2. Its pathway is phospholipid metabolism; phosphatidylethanolamine biosynthesis; phosphatidylethanolamine from CDP-diacylglycerol: step 2/2. Functionally, catalyzes the formation of phosphatidylethanolamine (PtdEtn) from phosphatidylserine (PtdSer). The polypeptide is Phosphatidylserine decarboxylase proenzyme (Shewanella sediminis (strain HAW-EB3)).